A 301-amino-acid polypeptide reads, in one-letter code: NADH-cytochrome b5 reductase 3 (301 aa).

Residue Gly-2 is the site of N-myristoyl glycine attachment. The 113-residue stretch at 40-152 (DIKYPLRLID…RGPNGLLVYQ (113 aa)) folds into the FAD-binding FR-type domain. An N6-acetyllysine modification is found at Lys-42. At Tyr-43 the chain carries Phosphotyrosine. The residue at position 50 (Lys-50) is an N6-acetyllysine. Positions 92, 93, 94, 109, 111, and 114 each coordinate FAD. An N6-acetyllysine modification is found at Lys-120. Lys-126, Met-127, Ser-128, and Thr-185 together coordinate FAD.

The protein belongs to the flavoprotein pyridine nucleotide cytochrome reductase family. Component of a complex composed of cytochrome b5, NADH-cytochrome b5 reductase (CYB5R3) and MTARC2. Interacts with MTLN; the interaction is required to maintain cellular lipid composition and leads to stimulation of mitochondrial respiratory complex I activity. It depends on FAD as a cofactor. Post-translationally, myristoylated. In terms of tissue distribution, ubiquitously expressed. Expressed only in erythroid tissues, reticulocytes and liver.

It localises to the endoplasmic reticulum membrane. It is found in the mitochondrion outer membrane. The protein resides in the cytoplasm. It catalyses the reaction 2 Fe(III)-[cytochrome b5] + NADH = 2 Fe(II)-[cytochrome b5] + NAD(+) + H(+). In terms of biological role, catalyzes the reduction of two molecules of cytochrome b5 using NADH as the electron donor. This chain is NADH-cytochrome b5 reductase 3, found in Rattus norvegicus (Rat).